Consider the following 334-residue polypeptide: Replication factor C subunit 4 (334 aa).

Gly-55 to Thr-62 lines the ATP pocket.

The protein belongs to the activator 1 small subunits family. As to quaternary structure, heteropentamer of various rfc subunits that forms a complex (RFC) with PCNA in the presence of ATP.

It localises to the nucleus. The elongation of primed DNA templates by DNA polymerase delta and epsilon requires the action of the accessory proteins PCNA and activator 1. This subunit may be involved in the elongation of the multiprimed DNA template. This is Replication factor C subunit 4 (rfc-4) from Caenorhabditis elegans.